Here is a 336-residue protein sequence, read N- to C-terminus: Holliday junction branch migration complex subunit RuvB (336 aa).

The interval A4–Y184 is large ATPase domain (RuvB-L). Residues R24, G65, K68, T69, T70, E131–Y133, R174, Y184, and R221 contribute to the ATP site. T69 serves as a coordination point for Mg(2+). The small ATPAse domain (RuvB-S) stretch occupies residues N185–D255. Residues A258–K336 form a head domain (RuvB-H) region. Residues R294, R313, and R318 each coordinate DNA.

This sequence belongs to the RuvB family. As to quaternary structure, homohexamer. Forms an RuvA(8)-RuvB(12)-Holliday junction (HJ) complex. HJ DNA is sandwiched between 2 RuvA tetramers; dsDNA enters through RuvA and exits via RuvB. An RuvB hexamer assembles on each DNA strand where it exits the tetramer. Each RuvB hexamer is contacted by two RuvA subunits (via domain III) on 2 adjacent RuvB subunits; this complex drives branch migration. In the full resolvosome a probable DNA-RuvA(4)-RuvB(12)-RuvC(2) complex forms which resolves the HJ.

The protein resides in the cytoplasm. The enzyme catalyses ATP + H2O = ADP + phosphate + H(+). Its function is as follows. The RuvA-RuvB-RuvC complex processes Holliday junction (HJ) DNA during genetic recombination and DNA repair, while the RuvA-RuvB complex plays an important role in the rescue of blocked DNA replication forks via replication fork reversal (RFR). RuvA specifically binds to HJ cruciform DNA, conferring on it an open structure. The RuvB hexamer acts as an ATP-dependent pump, pulling dsDNA into and through the RuvAB complex. RuvB forms 2 homohexamers on either side of HJ DNA bound by 1 or 2 RuvA tetramers; 4 subunits per hexamer contact DNA at a time. Coordinated motions by a converter formed by DNA-disengaged RuvB subunits stimulates ATP hydrolysis and nucleotide exchange. Immobilization of the converter enables RuvB to convert the ATP-contained energy into a lever motion, pulling 2 nucleotides of DNA out of the RuvA tetramer per ATP hydrolyzed, thus driving DNA branch migration. The RuvB motors rotate together with the DNA substrate, which together with the progressing nucleotide cycle form the mechanistic basis for DNA recombination by continuous HJ branch migration. Branch migration allows RuvC to scan DNA until it finds its consensus sequence, where it cleaves and resolves cruciform DNA. The chain is Holliday junction branch migration complex subunit RuvB from Shewanella piezotolerans (strain WP3 / JCM 13877).